A 330-amino-acid chain; its full sequence is Beta-ketoacyl-[acyl-carrier-protein] synthase III (330 aa).

Active-site residues include Cys-114 and His-255. The segment at 256 to 260 is ACP-binding; it reads QANQR. Asn-285 is a catalytic residue.

This sequence belongs to the thiolase-like superfamily. FabH family. In terms of assembly, homodimer.

The protein resides in the cytoplasm. The catalysed reaction is malonyl-[ACP] + acetyl-CoA + H(+) = 3-oxobutanoyl-[ACP] + CO2 + CoA. It functions in the pathway lipid metabolism; fatty acid biosynthesis. Its function is as follows. Catalyzes the condensation reaction of fatty acid synthesis by the addition to an acyl acceptor of two carbons from malonyl-ACP. Catalyzes the first condensation reaction which initiates fatty acid synthesis and may therefore play a role in governing the total rate of fatty acid production. Possesses both acetoacetyl-ACP synthase and acetyl transacylase activities. Its substrate specificity determines the biosynthesis of branched-chain and/or straight-chain of fatty acids. The protein is Beta-ketoacyl-[acyl-carrier-protein] synthase III of Nostoc sp. (strain PCC 7120 / SAG 25.82 / UTEX 2576).